The primary structure comprises 163 residues: MIVVQKQLINSQIKSPQVFLIDHENNNRGLIDTYEALQLAQSVELDLVVVSQSKDTPVAKILNYGKLQYQKKKRQGQSARPTVKEVRFRPNVGAADYNLRIEQALQWLSKGDSVKFAIRLRGRENQYREQAGQMLERIVTDLSQVGKVQSLDKRSLIVQIMPA.

The protein belongs to the IF-3 family.

The protein is Translation initiation factor IF-3-like of Nostoc sp. (strain PCC 7120 / SAG 25.82 / UTEX 2576).